A 730-amino-acid polypeptide reads, in one-letter code: Tubulin polyglutamylase ttll-5 (730 aa).

Residues 120–478 (RLRLTFKMMR…PLLDRKIIDS (359 aa)) form the TTL domain. ATP contacts are provided by residues 278–281 (SRYL), lysine 291, and aspartate 293. The interval 594–618 (KKNTKNSSGSSKASSSSASASSSSS) is disordered. The segment covering 600–618 (SSGSSKASSSSASASSSSS) has biased composition (low complexity).

This sequence belongs to the tubulin--tyrosine ligase family. In terms of tissue distribution, expressed in body wall muscles. Not expressed in sensory neurons.

The catalysed reaction is L-glutamyl-[protein] + L-glutamate + ATP = gamma-L-glutamyl-L-glutamyl-[protein] + ADP + phosphate + H(+). Its function is as follows. Polyglutamylase which preferentially modifies alpha-tubulin. Involved in the side-chain initiation step of the polyglutamylation reaction rather than in the elongation step. Together with ttll-4 and ttll-11, required for male mating. Probably by regulating microtubule stability via the glutamylation of tubulin, negatively regulates axon regrowth after injury in PLM neurons. This Caenorhabditis elegans protein is Tubulin polyglutamylase ttll-5.